Here is a 273-residue protein sequence, read N- to C-terminus: Large ribosomal subunit protein uL2 (273 aa).

Residues 221 to 263 (RGTAMNPVDHPHGGGEGRNFGKHPVTPWGVQTKGKKTRHNKRT) are disordered. The span at 253–263 (KGKKTRHNKRT) shows a compositional bias: basic residues.

This sequence belongs to the universal ribosomal protein uL2 family. Part of the 50S ribosomal subunit. Forms a bridge to the 30S subunit in the 70S ribosome.

Its function is as follows. One of the primary rRNA binding proteins. Required for association of the 30S and 50S subunits to form the 70S ribosome, for tRNA binding and peptide bond formation. It has been suggested to have peptidyltransferase activity; this is somewhat controversial. Makes several contacts with the 16S rRNA in the 70S ribosome. The protein is Large ribosomal subunit protein uL2 of Histophilus somni (strain 2336) (Haemophilus somnus).